The chain runs to 165 residues: Transcription factor E (165 aa).

Residues 5 to 87 form the HTH TFE/IIEalpha-type domain; that stretch reads NDPVVRGYLL…LWQLDLSDIE (83 aa).

This sequence belongs to the TFE family. Monomer. Interaction with RNA polymerase subunits RpoF and RpoE is necessary for Tfe stimulatory transcription activity. Able to interact with Tbp and RNA polymerase in the absence of DNA promoter. Interacts both with the preinitiation and elongation complexes.

In terms of biological role, transcription factor that plays a role in the activation of archaeal genes transcribed by RNA polymerase. Facilitates transcription initiation by enhancing TATA-box recognition by TATA-box-binding protein (Tbp), and transcription factor B (Tfb) and RNA polymerase recruitment. Not absolutely required for transcription in vitro, but particularly important in cases where Tbp or Tfb function is not optimal. It dynamically alters the nucleic acid-binding properties of RNA polymerases by stabilizing the initiation complex and destabilizing elongation complexes. Seems to translocate with the RNA polymerase following initiation and acts by binding to the non template strand of the transcription bubble in elongation complexes. This chain is Transcription factor E, found in Methanococcoides burtonii (strain DSM 6242 / NBRC 107633 / OCM 468 / ACE-M).